The following is a 393-amino-acid chain: MEDTFLFTSESVNEGHPDKLCDQISDAVLDACLEQDPDSKVACETCTKTNMVMVFGEITTKGNIDYEKIVRDTCRDIGFTSEDVGLDADHCKVLVNIEQQSPDIAQGVHGHFTKRPEEIGAGDQGHMFGYATDETPELMPLSHVLATKLGARLTEVRKNGTCPWLRPDGKTQVTVEYRNDHGAMIPVRVHTVLISTQHDETVTNDEIAADLKEHVIKPVIPEQYLDEKTIFHLNPSGRFVIGGPHGDAGLTGRKIIIDTYGGWGAHGGGAFSGKDPTKVDRSGAYVARQAAKSIVASELARRCIVQVSYAIGVPEPLSVFVDTYGTGKIPDKEILKIVKENFDFRPGLITINLGLKRGGYRYLKTAAYGHFGRDDPDFTWEVVKPLELEKPAA.

A Mg(2+)-binding site is contributed by E10. Residue H16 participates in ATP binding. E44 contacts K(+). L-methionine contacts are provided by E57 and Q100. ATP-binding positions include 168 to 170 (DGK), 236 to 239 (SGRF), D247, 253 to 254 (RK), A270, K274, and K278. An L-methionine-binding site is contributed by D247. K278 lines the L-methionine pocket.

This sequence belongs to the AdoMet synthase family. Homotetramer. Mn(2+) serves as cofactor. Mg(2+) is required as a cofactor. Requires Co(2+) as cofactor. It depends on K(+) as a cofactor.

It localises to the cytoplasm. It carries out the reaction L-methionine + ATP + H2O = S-adenosyl-L-methionine + phosphate + diphosphate. It functions in the pathway amino-acid biosynthesis; S-adenosyl-L-methionine biosynthesis; S-adenosyl-L-methionine from L-methionine: step 1/1. Its function is as follows. Catalyzes the formation of S-adenosylmethionine from methionine and ATP. The reaction comprises two steps that are both catalyzed by the same enzyme: formation of S-adenosylmethionine (AdoMet) and triphosphate, and subsequent hydrolysis of the triphosphate. The polypeptide is S-adenosylmethionine synthase (METK) (Musa acuminata (Banana)).